The sequence spans 298 residues: 4-hydroxy-tetrahydrodipicolinate synthase (298 aa).

A pyruvate-binding site is contributed by Thr51. The active-site Proton donor/acceptor is the Tyr139. Lys167 (schiff-base intermediate with substrate) is an active-site residue. Residue Ile209 participates in pyruvate binding.

The protein belongs to the DapA family. In terms of assembly, homotetramer; dimer of dimers.

The protein resides in the cytoplasm. It carries out the reaction L-aspartate 4-semialdehyde + pyruvate = (2S,4S)-4-hydroxy-2,3,4,5-tetrahydrodipicolinate + H2O + H(+). It functions in the pathway amino-acid biosynthesis; L-lysine biosynthesis via DAP pathway; (S)-tetrahydrodipicolinate from L-aspartate: step 3/4. Functionally, catalyzes the condensation of (S)-aspartate-beta-semialdehyde [(S)-ASA] and pyruvate to 4-hydroxy-tetrahydrodipicolinate (HTPA). In Histophilus somni (strain 129Pt) (Haemophilus somnus), this protein is 4-hydroxy-tetrahydrodipicolinate synthase.